The sequence spans 517 residues: Crotonobetaine/carnitine--CoA ligase (517 aa).

It belongs to the ATP-dependent AMP-binding enzyme family.

The enzyme catalyses 4-(trimethylamino)butanoate + ATP + CoA = 4-(trimethylamino)butanoyl-CoA + AMP + diphosphate. It catalyses the reaction crotonobetaine + ATP + CoA = crotonobetainyl-CoA + AMP + diphosphate. It carries out the reaction (R)-carnitine + ATP + CoA = (R)-carnitinyl-CoA + AMP + diphosphate. It participates in amine and polyamine metabolism; carnitine metabolism. Its function is as follows. Catalyzes the transfer of CoA to carnitine, generating the initial carnitinyl-CoA needed for the CaiB reaction cycle. Also has activity toward crotonobetaine and gamma-butyrobetaine. The protein is Crotonobetaine/carnitine--CoA ligase of Escherichia coli O8 (strain IAI1).